The primary structure comprises 359 residues: Photosystem II protein D1 3 (359 aa).

3 helical membrane passes run 29-46 (YVGWFGVLMIPTLLAATI), 118-133 (HFLIGIYAYMGREWEL), and 142-156 (WICVAYSAPVAAASA). His-118 provides a ligand contact to chlorophyll a. A pheophytin a-binding site is contributed by Tyr-126. [CaMn4O5] cluster contacts are provided by Asp-170 and Glu-189. The chain crosses the membrane as a helical span at residues 197-218 (FHMLGVAGVFGGSLFSAMHGSL). His-198 contributes to the chlorophyll a binding site. A quinone-binding positions include His-215 and 264–265 (SF). Position 215 (His-215) interacts with Fe cation. His-272 provides a ligand contact to Fe cation. Residues 274–288 (FLAAWPVVGIWFTAL) traverse the membrane as a helical segment. [CaMn4O5] cluster-binding residues include His-332, Glu-333, Asp-342, and Ala-344. A propeptide spanning residues 345 to 359 (AAESTPVALQVPAIG) is cleaved from the precursor.

It belongs to the reaction center PufL/M/PsbA/D family. As to quaternary structure, PSII is composed of 1 copy each of membrane proteins PsbA, PsbB, PsbC, PsbD, PsbE, PsbF, PsbH, PsbI, PsbJ, PsbK, PsbL, PsbM, PsbT, PsbX, PsbY, PsbZ, Psb30/Ycf12, peripheral proteins PsbO, CyanoQ (PsbQ), PsbU, PsbV and a large number of cofactors. It forms dimeric complexes. The D1/D2 heterodimer binds P680, chlorophylls that are the primary electron donor of PSII, and subsequent electron acceptors. It shares a non-heme iron and each subunit binds pheophytin, quinone, additional chlorophylls, carotenoids and lipids. D1 provides most of the ligands for the Mn4-Ca-O5 cluster of the oxygen-evolving complex (OEC). There is also a Cl(-1) ion associated with D1 and D2, which is required for oxygen evolution. The PSII complex binds additional chlorophylls, carotenoids and specific lipids. serves as cofactor. Post-translationally, tyr-161 forms a radical intermediate that is referred to as redox-active TyrZ, YZ or Y-Z. In terms of processing, C-terminally processed by CtpA; processing is essential to allow assembly of the oxygen-evolving complex and thus photosynthetic growth.

Its subcellular location is the cellular thylakoid membrane. It catalyses the reaction 2 a plastoquinone + 4 hnu + 2 H2O = 2 a plastoquinol + O2. In terms of biological role, photosystem II (PSII) is a light-driven water:plastoquinone oxidoreductase that uses light energy to abstract electrons from H(2)O, generating O(2) and a proton gradient subsequently used for ATP formation. It consists of a core antenna complex that captures photons, and an electron transfer chain that converts photonic excitation into a charge separation. The D1/D2 (PsbA/PsbD) reaction center heterodimer binds P680, the primary electron donor of PSII as well as several subsequent electron acceptors. This chain is Photosystem II protein D1 3, found in Parasynechococcus marenigrum (strain WH8102).